Consider the following 186-residue polypeptide: Large ribosomal subunit protein uL5 (186 aa).

The protein belongs to the universal ribosomal protein uL5 family. In terms of assembly, part of the 50S ribosomal subunit; part of the 5S rRNA/L5/L18/L25 subcomplex. Contacts the 5S rRNA and the P site tRNA. Forms a bridge to the 30S subunit in the 70S ribosome.

This is one of the proteins that bind and probably mediate the attachment of the 5S RNA into the large ribosomal subunit, where it forms part of the central protuberance. In the 70S ribosome it contacts protein S13 of the 30S subunit (bridge B1b), connecting the 2 subunits; this bridge is implicated in subunit movement. Contacts the P site tRNA; the 5S rRNA and some of its associated proteins might help stabilize positioning of ribosome-bound tRNAs. This chain is Large ribosomal subunit protein uL5, found in Ruegeria pomeroyi (strain ATCC 700808 / DSM 15171 / DSS-3) (Silicibacter pomeroyi).